The primary structure comprises 208 residues: Small ribosomal subunit protein uS4 (208 aa).

An S4 RNA-binding domain is found at 97-158 (TRLDNVIYRM…RAQKYLCVQE (62 aa)).

This sequence belongs to the universal ribosomal protein uS4 family. In terms of assembly, part of the 30S ribosomal subunit. Contacts protein S5. The interaction surface between S4 and S5 is involved in control of translational fidelity.

One of the primary rRNA binding proteins, it binds directly to 16S rRNA where it nucleates assembly of the body of the 30S subunit. Functionally, with S5 and S12 plays an important role in translational accuracy. This Xylella fastidiosa (strain 9a5c) protein is Small ribosomal subunit protein uS4.